Consider the following 351-residue polypeptide: Ceramide hydroxylase (351 aa).

The next 4 helical transmembrane spans lie at 26-46 (AAIYWADLTISAAVMWGGFLI), 47-67 (AATTSSLALGLGAALLSMLAL), 141-161 (GFLFIALLAPLGVILRSAILI), and 204-224 (VACWLWSWAVIAGLGLGVVPV).

Belongs to the fatty acid desaturase type 1 family.

Its subcellular location is the cell inner membrane. It functions in the pathway lipid metabolism; sphingolipid metabolism. Involved in de novo bacterial ceramide synthesis. In Caulobacter vibrioides (strain NA1000 / CB15N) (Caulobacter crescentus), this protein is Ceramide hydroxylase.